A 329-amino-acid polypeptide reads, in one-letter code: Tryptophan--tRNA ligase (329 aa).

Residues 9–11 (QPS) and 17–18 (GN) contribute to the ATP site. A 'HIGH' region motif is present at residues 10–18 (PSGIPTIGN). D133 is an L-tryptophan binding site. ATP is bound by residues 145–147 (GDD), V184, and 193–197 (KMSKS). A 'KMSKS' region motif is present at residues 193 to 197 (KMSKS).

The protein belongs to the class-I aminoacyl-tRNA synthetase family. In terms of assembly, homodimer.

The protein resides in the cytoplasm. It carries out the reaction tRNA(Trp) + L-tryptophan + ATP = L-tryptophyl-tRNA(Trp) + AMP + diphosphate + H(+). Its function is as follows. Catalyzes the attachment of tryptophan to tRNA(Trp). This chain is Tryptophan--tRNA ligase, found in Staphylococcus aureus (strain MSSA476).